Reading from the N-terminus, the 240-residue chain is UDP-2,3-diacylglucosamine hydrolase (240 aa).

Asp-9, His-11, Asp-43, Asn-81, and His-116 together coordinate Mn(2+). A substrate-binding site is contributed by Asn-81–Arg-82. Substrate is bound by residues Asp-124, Ser-162, Lys-166, Lys-169, and His-197. The Mn(2+) site is built by His-197 and His-199.

It belongs to the LpxH family. It depends on Mn(2+) as a cofactor.

It localises to the cell inner membrane. The enzyme catalyses UDP-2-N,3-O-bis[(3R)-3-hydroxytetradecanoyl]-alpha-D-glucosamine + H2O = 2-N,3-O-bis[(3R)-3-hydroxytetradecanoyl]-alpha-D-glucosaminyl 1-phosphate + UMP + 2 H(+). It participates in glycolipid biosynthesis; lipid IV(A) biosynthesis; lipid IV(A) from (3R)-3-hydroxytetradecanoyl-[acyl-carrier-protein] and UDP-N-acetyl-alpha-D-glucosamine: step 4/6. Functionally, hydrolyzes the pyrophosphate bond of UDP-2,3-diacylglucosamine to yield 2,3-diacylglucosamine 1-phosphate (lipid X) and UMP by catalyzing the attack of water at the alpha-P atom. Involved in the biosynthesis of lipid A, a phosphorylated glycolipid that anchors the lipopolysaccharide to the outer membrane of the cell. This Neisseria gonorrhoeae (strain ATCC 700825 / FA 1090) protein is UDP-2,3-diacylglucosamine hydrolase.